Consider the following 153-residue polypeptide: Type II secretion system core protein G (153 aa).

Residues 1–7 (MERRQRG) constitute a propeptide, leader sequence. Phe-8 is modified (N-methylphenylalanine). The helical transmembrane segment at 8 to 28 (FTLLEIMVVIVILGVLASLVV) threads the bilayer. 2 disordered regions span residues 68 to 91 (EQGLGALVKKPTTPPEPRNYPQDG) and 126 to 153 (MPDTDDDIGNWNVGNGAHNNGGNGNGNP). Residues 134–143 (GNWNVGNGAH) are compositionally biased toward low complexity. A compositionally biased stretch (gly residues) spans 144-153 (NNGGNGNGNP).

This sequence belongs to the GSP G family. As to quaternary structure, type II secretion system is composed of four main components: the outer membrane complex, the inner membrane complex, the cytoplasmic secretion ATPase and the periplasm-spanning pseudopilus. Forms homomultimers. In terms of processing, cleaved by the prepilin peptidase. Methylated by prepilin peptidase at the amino group of the N-terminal phenylalanine once the leader sequence is cleaved.

The protein resides in the cell inner membrane. Functionally, core component of the type II secretion system required for the energy-dependent secretion of extracellular factors such as proteases and toxins from the periplasm. Pseudopilin (pilin-like) protein that polymerizes to form the pseudopilus. Further polymerization triggers pseudopilus growth. This Dickeya chrysanthemi (Pectobacterium chrysanthemi) protein is Type II secretion system core protein G (outG).